The following is a 76-amino-acid chain: uncharacterized protein (76 aa).

An N-terminal signal peptide occupies residues 1–15 (MYLPLLLFCVISCYG).

This is an uncharacterized protein from Magallana gigas (Pacific oyster).